We begin with the raw amino-acid sequence, 290 residues long: 4-diphosphocytidyl-2-C-methyl-D-erythritol kinase (290 aa).

Residue Lys11 is part of the active site. 97-107 (PVAAGIGGGSS) contacts ATP. Asp139 is an active-site residue.

This sequence belongs to the GHMP kinase family. IspE subfamily.

It catalyses the reaction 4-CDP-2-C-methyl-D-erythritol + ATP = 4-CDP-2-C-methyl-D-erythritol 2-phosphate + ADP + H(+). The protein operates within isoprenoid biosynthesis; isopentenyl diphosphate biosynthesis via DXP pathway; isopentenyl diphosphate from 1-deoxy-D-xylulose 5-phosphate: step 3/6. Its function is as follows. Catalyzes the phosphorylation of the position 2 hydroxy group of 4-diphosphocytidyl-2C-methyl-D-erythritol. The protein is 4-diphosphocytidyl-2-C-methyl-D-erythritol kinase of Methylobacterium radiotolerans (strain ATCC 27329 / DSM 1819 / JCM 2831 / NBRC 15690 / NCIMB 10815 / 0-1).